The sequence spans 212 residues: N-(5'-phosphoribosyl)anthranilate isomerase (212 aa).

The protein belongs to the TrpF family.

It catalyses the reaction N-(5-phospho-beta-D-ribosyl)anthranilate = 1-(2-carboxyphenylamino)-1-deoxy-D-ribulose 5-phosphate. It functions in the pathway amino-acid biosynthesis; L-tryptophan biosynthesis; L-tryptophan from chorismate: step 3/5. The protein is N-(5'-phosphoribosyl)anthranilate isomerase of Cereibacter sphaeroides (strain ATCC 17029 / ATH 2.4.9) (Rhodobacter sphaeroides).